Consider the following 1006-residue polypeptide: Multiple C2 domain and transmembrane region protein 9 (1006 aa).

Residues 1-108 form the C2 1 domain; the sequence is MSNIKLGVEV…PRSEAAPFNY (108 aa). Positions 135–156 are disordered; it reads VTPSVPTPVPESPQAYSPSPRK. C2 domains lie at 251 to 371, 411 to 536, and 579 to 704; these read RGTE…PQWY, SDSS…DRWV, and NSSD…THAY. 5 residues coordinate Ca(2+): D284, D290, D337, D339, and D344. Helical transmembrane passes span 842–862 and 946–966; these read MLVT…AVIG and ATAI…ITPF.

This sequence belongs to the MCTP family. The cofactor is Ca(2+). In terms of tissue distribution, expressed in incipient leaf primordia and roots meristems. Observed in flowers.

The protein localises to the cell membrane. Its subcellular location is the cytoplasm. May function as a signaling molecule by regulating the trafficking of other regulators. This chain is Multiple C2 domain and transmembrane region protein 9, found in Arabidopsis thaliana (Mouse-ear cress).